The chain runs to 407 residues: MAPHLNIVPSMFVLLLLFISASKVQSDAFDVVAKFGAKADGKTDLSKPFLDAWKEACASVTPSTVVIPKGTYLLSKVNLEGPCKAPIEINVQGTIQAPADPSAFKDPNWVRFYSVENFKMFGGGIFDGQGSIAYEKNTCENREFRSKLPVNIRFDFLTNALIQDITSKDSKLFHINVFACKNITLERLKIEAPDESPNTDGIHMGKSEGVNIIASDIKTGDDCISIGDGTKNMVIKEITCGPGHGISIGSLGKFQNEEPVEGIKISNCTITNTSNGARIKTWPGEHGGAVSEIHFEDITMNNVSSPILIDQQYCPWNKCKKNEESKVKLSNISFKNIRGTSALPEAIKFICSGSSPCQNVELADIDIKHNGAEPATSQCLNVKPITSGKLNPIPCSGPVPKTPSATA.

The first 26 residues, 1–26 (MAPHLNIVPSMFVLLLLFISASKVQS), serve as a signal peptide directing secretion. PbH1 repeat units follow at residues 180–206 (CKNI…HMGK) and 207–228 (SEGV…SIGD). The N-linked (GlcNAc...) asparagine glycan is linked to N182. Residue D221 is the Proton donor of the active site. C223 and C240 form a disulfide bridge. H244 is a catalytic residue. PbH1 repeat units lie at residues 260 to 281 (VEGI…RIKT) and 290 to 311 (VSEI…LIDQ). N267, N272, N302, and N331 each carry an N-linked (GlcNAc...) asparagine glycan. Intrachain disulfides connect C351–C357 and C379–C395. The stretch at 357–384 (CQNVELADIDIKHNGAEPATSQCLNVKP) is one PbH1 5 repeat.

The protein belongs to the glycosyl hydrolase 28 family. Pollen.

The protein localises to the secreted. Its subcellular location is the cell wall. The catalysed reaction is (1,4-alpha-D-galacturonosyl)n+m + H2O = (1,4-alpha-D-galacturonosyl)n + (1,4-alpha-D-galacturonosyl)m.. Its function is as follows. May function in the depolymerization of the pectin in its walls during pollen tube elongation, or in that of the pistil during pollination. The polypeptide is Polygalacturonase (G9) (Gossypium hirsutum (Upland cotton)).